Consider the following 288-residue polypeptide: MNRQRPFQQMNDLMKRGLPKGKYAFTGTGLLLALGLAGFAVQTSLFNVDGGHRAIKYSRIGGIKNLIYPEGTHFLIPWIETAIDYDVRAKPRNISSLTGTKDLQMVNINCRVLSRPDVHALPKIYRTLGGDYDERVLPSIVNEVLKSVVAQFNASQLITQRERVSRLVRENLMKRAARFNILLDDVSLTHVQFSPEFTAAVEAKQIAQQDAQRATFYVDRARMEKQGFIVRAQGEGRAAQLIGEAIKNKPGFIELRKLETAREIANILSKSNNKVMLNASTLLLDDIK.

A helical; Signal-anchor for type II membrane protein transmembrane segment spans residues 21 to 43 (GKYAFTGTGLLLALGLAGFAVQT). Positions 125-128 (YRTL) match the AIM motif.

It belongs to the prohibitin family. As to quaternary structure, the mitochondrial prohibitin complex consists of two subunits (phb1 and phb2). The subunits assemble into a membrane-associated ring-shaped supercomplex of approximately 1 mDa.

The protein resides in the mitochondrion inner membrane. Its function is as follows. Prohibitin probably acts as a holdase/unfoldase for the stabilization of newly synthesized mitochondrial proteins. Involved in mitophagy; may act as an adapter for atg8 that supports mitophagosome assembly. Negatively regulates the proteolytic processing of atg32 via the i-AAA protease. Acts as a negative regulator of the m-AAA protease. This chain is Prohibitin-2 (phb2), found in Schizosaccharomyces pombe (strain 972 / ATCC 24843) (Fission yeast).